We begin with the raw amino-acid sequence, 394 residues long: Probable nucleoredoxin 2 (394 aa).

2 consecutive Thioredoxin domains span residues 15–176 (GVGG…QTLE) and 180–327 (SVSG…EMED).

The protein belongs to the nucleoredoxin family.

The catalysed reaction is [protein]-dithiol + NAD(+) = [protein]-disulfide + NADH + H(+). It carries out the reaction [protein]-dithiol + NADP(+) = [protein]-disulfide + NADPH + H(+). Functionally, probable thiol-disulfide oxidoreductase that may participate in various redox reactions. This Oryza sativa subsp. japonica (Rice) protein is Probable nucleoredoxin 2.